A 160-amino-acid polypeptide reads, in one-letter code: MAFTFAAFCYMLTLVLCAALIFFVIWQIIAFDELRTDFKNPIDQSNPTRARERILNIERICNLLRRLVVPEYSIHGLFCLMFMCAGEWVTLGLNIPLLLYHLWRFFHRPADGSEVMYDPVSVMNADILNYCQKESWCKLGFYLLSFFYYLYSMVYALVSF.

Topologically, residues 1–10 are cytoplasmic; it reads MAFTFAAFCY. Residues 11-31 traverse the membrane as a helical segment; the sequence is MLTLVLCAALIFFVIWQIIAF. Over 32–72 the chain is Lumenal; it reads DELRTDFKNPIDQSNPTRARERILNIERICNLLRRLVVPEY. A helical transmembrane segment spans residues 73–93; sequence SIHGLFCLMFMCAGEWVTLGL. The Cytoplasmic portion of the chain corresponds to 94–138; it reads NIPLLLYHLWRFFHRPADGSEVMYDPVSVMNADILNYCQKESWCK. Residues 139–159 form a helical membrane-spanning segment; sequence LGFYLLSFFYYLYSMVYALVS. A topological domain (lumenal) is located at residue phenylalanine 160.

The protein belongs to the cornichon family.

It is found in the membrane. In terms of biological role, regulates the trafficking and gating properties of AMPA-selective glutamate receptors (AMPARs). In Danio rerio (Zebrafish), this protein is Protein cornichon homolog 2 (cnih2).